We begin with the raw amino-acid sequence, 1047 residues long: Probable alpha-mannosidase At5g66150 (1047 aa).

Residues 1 to 27 (MEKPGMSLLKGSLCVIVFLLLLSLVES) form the signal peptide. Residues H56, D58, and D178 each coordinate Zn(2+). N280, N287, and N345 each carry an N-linked (GlcNAc...) asparagine glycan. H419 is a Zn(2+) binding site. 2 disulfides stabilise this stretch: C455/C465 and C476/C484. N-linked (GlcNAc...) asparagine glycosylation is found at N480, N508, N541, N605, N606, N668, N780, and N857. C855 and C860 are disulfide-bonded.

This sequence belongs to the glycosyl hydrolase 38 family. Homodimer. Requires Zn(2+) as cofactor.

Its subcellular location is the vacuole. The catalysed reaction is Hydrolysis of terminal, non-reducing alpha-D-mannose residues in alpha-D-mannosides.. Liberates mannose from p-nitrophenyl-alpha-D-mannoside in vitro. The sequence is that of Probable alpha-mannosidase At5g66150 from Arabidopsis thaliana (Mouse-ear cress).